Here is a 391-residue protein sequence, read N- to C-terminus: RNA-binding motif protein, X chromosome (391 aa).

Met-1 is subject to N-acetylmethionine; in Heterogeneous nuclear ribonucleoprotein G; alternate. Val-2 is subject to N-acetylvaline; in Heterogeneous nuclear ribonucleoprotein G, N-terminally processed. One can recognise an RRM domain in the interval 8 to 86 (GKLFIGGLNT…KAIKVEQATK (79 aa)). A Glycyl lysine isopeptide (Lys-Gly) (interchain with G-Cter in SUMO2) cross-link involves residue Lys-22. Lys-30 carries the N6-acetyllysine modification. Residues 61–80 (DAKDAARDMNGKSLDGKAIK) are compositionally biased toward basic and acidic residues. Residues 61 to 391 (DAKDAARDMN…SDRGGGRSRY (331 aa)) form a disordered region. Glycyl lysine isopeptide (Lys-Gly) (interchain with G-Cter in SUMO2) cross-links involve residues Lys-80 and Lys-86. 2 positions are modified to phosphoserine: Ser-88 and Ser-91. Over residues 109 to 120 (LRGGRGGSGGTR) the composition is skewed to gly residues. Residues Arg-125, Arg-144, and Arg-164 each carry the omega-N-methylarginine modification. Pro residues predominate over residues 151–164 (RGPPPRSGGPPPKR). Phosphoserine is present on Ser-165. Position 172 is an omega-N-methylarginine (Arg-172). Ser-174 bears the Phosphoserine mark. Residues 186 to 236 (GRDSYGGPPRREPLPSRRDVYLSPRDDGYSTKDSYSSRDYPSSRDTRDYAP) are necessary for the association to nascent RNAPII transcripts and nuclear localization. Composition is skewed to basic and acidic residues over residues 194–215 (PRRE…DGYS) and 241–274 (YTYR…DYSD). A phosphoserine mark is found at Ser-261, Ser-328, Ser-329, Ser-330, and Ser-332. Over residues 323-337 (SRDSYSSSRSDLYSS) the composition is skewed to low complexity. The tract at residues 333–391 (DLYSSGRDRVGRQERGLPPSMERGYPPPRDSYSSSSRGAPRGGGRGGSRSDRGGGRSRY) is necessary for RNA-binding. Basic and acidic residues predominate over residues 338 to 347 (GRDRVGRQER). The residue at position 352 (Ser-352) is a Phosphoserine. Residues 362-371 (DSYSSSSRGA) show a composition bias toward low complexity. Basic and acidic residues predominate over residues 380–391 (SRSDRGGGRSRY).

In terms of assembly, homomultimer. Found in the supraspliceosome complex. Identified in the spliceosome C complex. Forms a complex with ILF2, ILF3, YLPM1, KHDRBS1, NCOA5 and PPP1CA. Interacts with CLK2, KHDRBS2, KHDRBS3, SAFB/SAFB1, TRA2B and YTHDC1. Interacts with ERAP1; the interaction is RNA-independent. Interacts with PPIA/CYPA. In terms of processing, O-glycosylated. Arg-185 is dimethylated, probably to asymmetric dimethylarginine.

Its subcellular location is the nucleus. In terms of biological role, RNA-binding protein that plays several role in the regulation of pre- and post-transcriptional processes. Implicated in tissue-specific regulation of gene transcription and alternative splicing of several pre-mRNAs. Binds to and stimulates transcription from the tumor suppressor TXNIP gene promoter; may thus be involved in tumor suppression. When associated with SAFB, binds to and stimulates transcription from the SREBF1 promoter. Associates with nascent mRNAs transcribed by RNA polymerase II. Component of the supraspliceosome complex that regulates pre-mRNA alternative splice site selection. Can either activate or suppress exon inclusion; acts additively with TRA2B to promote exon 7 inclusion of the survival motor neuron SMN2. Represses the splicing of MAPT/Tau exon 10. Binds preferentially to single-stranded 5'-CC[A/C]-rich RNA sequence motifs localized in a single-stranded conformation; probably binds RNA as a homodimer. Binds non-specifically to pre-mRNAs. Also plays a role in the cytoplasmic TNFR1 trafficking pathways; promotes both the IL-1-beta-mediated inducible proteolytic cleavage of TNFR1 ectodomains and the release of TNFR1 exosome-like vesicles to the extracellular compartment. This Pan troglodytes (Chimpanzee) protein is RNA-binding motif protein, X chromosome (RBMX).